A 331-amino-acid polypeptide reads, in one-letter code: CMRF35-like molecule 9 (331 aa).

An N-terminal signal peptide occupies residues 1–18; that stretch reads MRPLVLLWGCLVLPGYEA. The 102-residue stretch at 19–120 folds into the Ig-like V-type domain; sequence LKGPKEISGF…LGRDESFEVT (102 aa). The Extracellular portion of the chain corresponds to 19–204; that stretch reads LKGPKEISGF…KPSVSIPMVR (186 aa). Cysteines 37 and 106 form a disulfide. O-linked (GalNAc...) threonine glycosylation is present at Thr-136. A glycan (O-linked (GalNAc...) serine) is linked at Ser-140. A glycan (O-linked (GalNAc...) threonine) is linked at Thr-143. O-linked (GalNAc...) serine glycosylation occurs at Ser-145. 2 O-linked (GalNAc...) threonine glycosylation sites follow: Thr-150 and Thr-152. Ser-154 carries an O-linked (GalNAc...) serine glycan. Residues Thr-164, Thr-181, and Thr-182 are each glycosylated (O-linked (GalNAc...) threonine). Ser-186 carries an O-linked (GalNAc...) serine glycan. A helical transmembrane segment spans residues 205 to 225; that stretch reads MMAPVLILLSLLLAAGLIAFG. The Cytoplasmic portion of the chain corresponds to 226 to 331; the sequence is SHMLRWRKKA…ELAFSEFISV (106 aa). Positions 278–293 are enriched in polar residues; it reads NPSAVPSPETQNLSQS. The segment at 278 to 318 is disordered; sequence NPSAVPSPETQNLSQSTEEEEAARSLDDDKEDVMAPPPLQM.

The protein belongs to the CD300 family. In terms of processing, O-glycosylated with sialylated oligosaccharides. Expressed in monocyte cell lines. Expressed in certain types of endothelial and myeloid lineage cells. Expressed in mesenteric lymph nodes (LNs), spleen, thymus, lung, heart and kidney. Expressed in high endothelial venules (HEVs) in peripheral and mesenteric LNs (at protein level). Highly expressed in heart. Slightly expressed in spleen and thymus. Isoform 5 is expressed preferentially in heart. Isoform 1 is expressed predominantly in kidney and liver.

It is found in the apical cell membrane. The protein resides in the basolateral cell membrane. The protein localises to the endosome. Its subcellular location is the multivesicular body membrane. Receptor which may mediate L-selectin-dependent lymphocyte rollings. Binds SELL in a calcium dependent manner. Binds lymphocyte. The sequence is that of CMRF35-like molecule 9 (Cd300lg) from Mus musculus (Mouse).